The chain runs to 396 residues: CCA-adding enzyme (396 aa).

2 residues coordinate ATP: G27 and R30. The CTP site is built by G27 and R30. Residues D40 and D42 each contribute to the Mg(2+) site. 5 residues coordinate ATP: R111, D154, R157, R160, and R163. Residues R111, D154, R157, R160, and R163 each coordinate CTP.

It belongs to the tRNA nucleotidyltransferase/poly(A) polymerase family. Bacterial CCA-adding enzyme type 3 subfamily. As to quaternary structure, homodimer. It depends on Mg(2+) as a cofactor.

The catalysed reaction is a tRNA precursor + 2 CTP + ATP = a tRNA with a 3' CCA end + 3 diphosphate. The enzyme catalyses a tRNA with a 3' CCA end + 2 CTP + ATP = a tRNA with a 3' CCACCA end + 3 diphosphate. In terms of biological role, catalyzes the addition and repair of the essential 3'-terminal CCA sequence in tRNAs without using a nucleic acid template. Adds these three nucleotides in the order of C, C, and A to the tRNA nucleotide-73, using CTP and ATP as substrates and producing inorganic pyrophosphate. tRNA 3'-terminal CCA addition is required both for tRNA processing and repair. Also involved in tRNA surveillance by mediating tandem CCA addition to generate a CCACCA at the 3' terminus of unstable tRNAs. While stable tRNAs receive only 3'-terminal CCA, unstable tRNAs are marked with CCACCA and rapidly degraded. This chain is CCA-adding enzyme, found in Pediococcus pentosaceus (strain ATCC 25745 / CCUG 21536 / LMG 10740 / 183-1w).